Reading from the N-terminus, the 654-residue chain is tRNA 5-methylaminomethyl-2-thiouridine biosynthesis bifunctional protein MnmC (654 aa).

The segment at 1–235 is tRNA (mnm(5)s(2)U34)-methyltransferase; sequence MSDFQHAQLD…KREMLSGTYQ (235 aa). The interval 261-654 is FAD-dependent cmnm(5)s(2)U34 oxidoreductase; sequence VGGGLAGCAS…LRDLVRGQRG (394 aa).

In the N-terminal section; belongs to the methyltransferase superfamily. tRNA (mnm(5)s(2)U34)-methyltransferase family. This sequence in the C-terminal section; belongs to the DAO family. FAD is required as a cofactor.

The protein localises to the cytoplasm. The catalysed reaction is 5-aminomethyl-2-thiouridine(34) in tRNA + S-adenosyl-L-methionine = 5-methylaminomethyl-2-thiouridine(34) in tRNA + S-adenosyl-L-homocysteine + H(+). Its function is as follows. Catalyzes the last two steps in the biosynthesis of 5-methylaminomethyl-2-thiouridine (mnm(5)s(2)U) at the wobble position (U34) in tRNA. Catalyzes the FAD-dependent demodification of cmnm(5)s(2)U34 to nm(5)s(2)U34, followed by the transfer of a methyl group from S-adenosyl-L-methionine to nm(5)s(2)U34, to form mnm(5)s(2)U34. This chain is tRNA 5-methylaminomethyl-2-thiouridine biosynthesis bifunctional protein MnmC, found in Pseudomonas aeruginosa (strain ATCC 15692 / DSM 22644 / CIP 104116 / JCM 14847 / LMG 12228 / 1C / PRS 101 / PAO1).